Here is a 270-residue protein sequence, read N- to C-terminus: UPF0354 protein Bcer98_3354 (270 aa).

It belongs to the UPF0354 family.

This is UPF0354 protein Bcer98_3354 from Bacillus cytotoxicus (strain DSM 22905 / CIP 110041 / 391-98 / NVH 391-98).